A 308-amino-acid chain; its full sequence is Peptidyl-prolyl cis-trans isomerase CYP8 (308 aa).

Residues 56 to 215 (FTDPESSEEA…QPITIGYISS (160 aa)) enclose the PPIase cyclophilin-type domain.

It carries out the reaction [protein]-peptidylproline (omega=180) = [protein]-peptidylproline (omega=0). Functionally, PPIases accelerate the folding of proteins. It catalyzes the cis-trans isomerization of proline imidic peptide bonds in oligopeptides. The protein is Peptidyl-prolyl cis-trans isomerase CYP8 (CPR8) of Saccharomyces cerevisiae (strain ATCC 204508 / S288c) (Baker's yeast).